Consider the following 44-residue polypeptide: Protein non-structural 7b (44 aa).

Residues 9–29 (FYLCFLAFLLFLVLIMLIIFW) form a helical membrane-spanning segment.

It localises to the host membrane. This is Protein non-structural 7b from Homo sapiens (Human).